The sequence spans 595 residues: Aspartate--tRNA(Asp/Asn) ligase (595 aa).

E175 is an L-aspartate binding site. The tract at residues 199 to 202 is aspartate; sequence QQFK. L-aspartate is bound by residues R221 and H451. 221–223 contacts ATP; sequence RDE. ATP is bound at residue E485. R492 contributes to the L-aspartate binding site. Position 537–540 (537–540) interacts with ATP; sequence GVDR.

It belongs to the class-II aminoacyl-tRNA synthetase family. Type 1 subfamily. As to quaternary structure, homodimer.

The protein resides in the cytoplasm. It carries out the reaction tRNA(Asx) + L-aspartate + ATP = L-aspartyl-tRNA(Asx) + AMP + diphosphate. Functionally, aspartyl-tRNA synthetase with relaxed tRNA specificity since it is able to aspartylate not only its cognate tRNA(Asp) but also tRNA(Asn). Reaction proceeds in two steps: L-aspartate is first activated by ATP to form Asp-AMP and then transferred to the acceptor end of tRNA(Asp/Asn). The protein is Aspartate--tRNA(Asp/Asn) ligase of Acidiphilium cryptum (strain JF-5).